The sequence spans 645 residues: Acetyl-coenzyme A synthetase 2 (645 aa).

CoA-binding positions include 190–193 (RGGK), T308, and N332. ATP is bound by residues 384–386 (GEP), 408–413 (DTWWQT), D497, and R512. S520 contacts CoA. R523 provides a ligand contact to ATP. Mg(2+) contacts are provided by V534, H536, and V539. K606 is modified (N6-acetyllysine).

This sequence belongs to the ATP-dependent AMP-binding enzyme family. Requires Mg(2+) as cofactor. In terms of processing, acetylated. Deacetylation by the SIR2-homolog deacetylase activates the enzyme.

The catalysed reaction is acetate + ATP + CoA = acetyl-CoA + AMP + diphosphate. Its function is as follows. Catalyzes the conversion of acetate into acetyl-CoA (AcCoA), an essential intermediate at the junction of anabolic and catabolic pathways. AcsA undergoes a two-step reaction. In the first half reaction, AcsA combines acetate with ATP to form acetyl-adenylate (AcAMP) intermediate. In the second half reaction, it can then transfer the acetyl group from AcAMP to the sulfhydryl group of CoA, forming the product AcCoA. In Pseudomonas aeruginosa (strain ATCC 15692 / DSM 22644 / CIP 104116 / JCM 14847 / LMG 12228 / 1C / PRS 101 / PAO1), this protein is Acetyl-coenzyme A synthetase 2.